Consider the following 381-residue polypeptide: Subtilisin E (381 aa).

An N-terminal signal peptide occupies residues 1-29; that stretch reads MRSKKLWISLLFALTLIFTMAFSNMSAQA. A propeptide spanning residues 30 to 106 is cleaved from the precursor; it reads AGKSSTEKKY…VEEDHIAHEY (77 aa). Residues 38 to 103 form the Inhibitor I9 domain; sequence KYIVGFKQTM…VAYVEEDHIA (66 aa). Gln-108 contributes to the Ca(2+) binding site. The Peptidase S8 domain occupies 111–380; the sequence is PYGISQIKAP…KGLINVQAAA (270 aa). Catalysis depends on Asp-138, which acts as the Charge relay system. Asp-147 contributes to the Ca(2+) binding site. His-170 acts as the Charge relay system in catalysis. Ca(2+)-binding residues include Leu-181, Asn-183, Ile-185, Val-187, Ala-275, Tyr-277, Thr-280, and Asp-303. The Charge relay system role is filled by Ser-327.

This sequence belongs to the peptidase S8 family. The cofactor is Ca(2+).

Its subcellular location is the secreted. It catalyses the reaction Hydrolysis of proteins with broad specificity for peptide bonds, and a preference for a large uncharged residue in P1. Hydrolyzes peptide amides.. Inhibited by PMSF (phenylmethylsulphonyl fluoride) and 3,4-dichloroisocoumarin but not by EDTA (shown for strain RT-5). Functionally, an extracellular alkaline serine protease, it catalyzes the hydrolysis of proteins and peptide amides. The protein is Subtilisin E of Bacillus subtilis (strain 168).